Reading from the N-terminus, the 649-residue chain is 2-hydroxyacyl-CoA lyase 2 (649 aa).

The helical transmembrane segment at 2–21 threads the bilayer; sequence FHLIPFVVAFLLVFLTWFLI. Glutamate 84 provides a ligand contact to thiamine diphosphate. The thiamine pyrophosphate binding stretch occupies residues 474 to 554; sequence DFVGSAAYIL…AIGVIGNDAC (81 aa). Mg(2+) is bound by residues aspartate 525 and asparagine 551.

It belongs to the TPP enzyme family. Mg(2+) is required as a cofactor. Requires thiamine diphosphate as cofactor.

The protein localises to the endoplasmic reticulum membrane. It carries out the reaction 2-hydroxyoctadecanoyl-CoA = heptadecanal + formyl-CoA. The enzyme catalyses (2R)-hydroxyhexadecanoyl-CoA = pentadecanal + formyl-CoA. Its function is as follows. Endoplasmic reticulum 2-OH acyl-CoA lyase involved in the cleavage (C1 removal) reaction in the fatty acid alpha-oxydation in a thiamine pyrophosphate (TPP)-dependent manner. Involved in the phytosphingosine degradation pathway. The sequence is that of 2-hydroxyacyl-CoA lyase 2 (ilvbl) from Xenopus laevis (African clawed frog).